A 1379-amino-acid chain; its full sequence is DNA-directed RNA polymerase subunit beta'' (1379 aa).

Cysteine 220, cysteine 293, cysteine 300, and cysteine 303 together coordinate Zn(2+).

It belongs to the RNA polymerase beta' chain family. RpoC2 subfamily. In plastids the minimal PEP RNA polymerase catalytic core is composed of four subunits: alpha, beta, beta', and beta''. When a (nuclear-encoded) sigma factor is associated with the core the holoenzyme is formed, which can initiate transcription. The cofactor is Zn(2+).

It localises to the plastid. Its subcellular location is the chloroplast. It carries out the reaction RNA(n) + a ribonucleoside 5'-triphosphate = RNA(n+1) + diphosphate. In terms of biological role, DNA-dependent RNA polymerase catalyzes the transcription of DNA into RNA using the four ribonucleoside triphosphates as substrates. This chain is DNA-directed RNA polymerase subunit beta'', found in Barbarea verna (Land cress).